The chain runs to 285 residues: Bifunctional protein FolD (285 aa).

Residues 166–168 (GAS) and Ile-232 contribute to the NADP(+) site.

Belongs to the tetrahydrofolate dehydrogenase/cyclohydrolase family. As to quaternary structure, homodimer.

It catalyses the reaction (6R)-5,10-methylene-5,6,7,8-tetrahydrofolate + NADP(+) = (6R)-5,10-methenyltetrahydrofolate + NADPH. The enzyme catalyses (6R)-5,10-methenyltetrahydrofolate + H2O = (6R)-10-formyltetrahydrofolate + H(+). Its pathway is one-carbon metabolism; tetrahydrofolate interconversion. Functionally, catalyzes the oxidation of 5,10-methylenetetrahydrofolate to 5,10-methenyltetrahydrofolate and then the hydrolysis of 5,10-methenyltetrahydrofolate to 10-formyltetrahydrofolate. The protein is Bifunctional protein FolD of Psychromonas ingrahamii (strain DSM 17664 / CCUG 51855 / 37).